A 515-amino-acid polypeptide reads, in one-letter code: Synaptic vesicular amine transporter (515 aa).

The Cytoplasmic portion of the chain corresponds to M1 to K20. Residues L21–V41 form a helical membrane-spanning segment. Residues P42–V130 lie on the Lumenal, vesicle side of the membrane. N56, N80, N81, N89, and N111 each carry an N-linked (GlcNAc...) asparagine glycan. A disulfide bridge connects residues C118 and C325. The chain crosses the membrane as a helical span at residues Q131 to G151. Residues L152–P160 lie on the Cytoplasmic side of the membrane. A helical membrane pass occupies residues I161–S181. The Lumenal, vesicle segment spans residues S182–R190. Residues S191–V211 form a helical membrane-spanning segment. Residues Y212–K220 are Cytoplasmic-facing. Residues P221–L243 traverse the membrane as a helical segment. Serotonin contacts are provided by L229 and V233. At Y244 to K249 the chain is on the lumenal, vesicle side. A helical transmembrane segment spans residues T250–Q272. Topologically, residues P273–D292 are cytoplasmic. Residues P293–L312 form a helical membrane-spanning segment. 5 residues coordinate serotonin: N306, I309, E313, F335, and Y342. The Lumenal, vesicle portion of the chain corresponds to E313 to W329. A helical membrane pass occupies residues Q330 to A353. The Cytoplasmic portion of the chain corresponds to H354–R358. Residues W359–A379 form a helical membrane-spanning segment. Residues K380–F390 are Lumenal, vesicle-facing. A helical transmembrane segment spans residues G391–V411. D400 contributes to the serotonin binding site. Over D412 to H415 the chain is Cytoplasmic. Residues V416–I436 form a helical membrane-spanning segment. A serotonin-binding site is contributed by Y434. Residues G437–G441 lie on the Lumenal, vesicle side of the membrane. Residues G442–A463 form a helical membrane-spanning segment. Residues F464–D515 are Cytoplasmic-facing. Residues S512 and S514 each carry the phosphoserine; by CK2 modification.

Belongs to the major facilitator superfamily. Vesicular transporter family. As to quaternary structure, interacts with SLC6A3. In terms of tissue distribution, expressed in the substantia nigra and the tuberomammillary nucleus of the posterior hypothalamus. Expressed in stomach, in particular in varicose nerve fibers and enterochromaffin-like cells in the corpus region (at protein level).

It is found in the cytoplasmic vesicle. The protein resides in the secretory vesicle. It localises to the synaptic vesicle membrane. The protein localises to the secretory vesicle membrane. Its subcellular location is the cell projection. It is found in the axon. The protein resides in the dendrite. It catalyses the reaction serotonin(in) + 2 H(+)(out) = serotonin(out) + 2 H(+)(in). The catalysed reaction is dopamine(in) + 2 H(+)(out) = dopamine(out) + 2 H(+)(in). The enzyme catalyses histamine(in) + 2 H(+)(out) = histamine(out) + 2 H(+)(in). Strongly inhibited by reserpine and tetrabenazine. Also inhibited to a lesser extent by ketanserin and fenfluramine. Reserpine and ketanserin inhibit by blocking the substrate-binding pocket. Tetrabenazine traps SLC18A2/VMAT2 in an occluded conformation and its inhibition is specific to SLC18A2/VMAT2 but not SLC18A1/VMAT1. In terms of biological role, electrogenic antiporter that exchanges one cationic monoamine with two intravesicular protons across the membrane of secretory and synaptic vesicles. Uses the electrochemical proton gradient established by the V-type proton-pump ATPase to accumulate high concentrations of monoamines inside the vesicles prior to their release via exocytosis. Transports a variety of catecholamines such as dopamine, adrenaline and noradrenaline, histamine, and indolamines such as serotonin. Regulates the transvesicular monoaminergic gradient that determines the quantal size. Mediates somatodendritic dopamine release in hippocampal neurons, likely as part of a regulated secretory pathway that integrates retrograde synaptic signals. Acts as a primary transporter for striatal dopamine loading ensuring impulse-dependent release of dopamine at the synaptic cleft. Responsible for histamine and serotonin storage and subsequent corelease from mast cell granules. This chain is Synaptic vesicular amine transporter (Slc18a2), found in Rattus norvegicus (Rat).